The chain runs to 104 residues: Large ribosomal subunit protein bL21 (104 aa).

It belongs to the bacterial ribosomal protein bL21 family. As to quaternary structure, part of the 50S ribosomal subunit. Contacts protein L20.

This protein binds to 23S rRNA in the presence of protein L20. This chain is Large ribosomal subunit protein bL21, found in Clostridium tetani (strain Massachusetts / E88).